We begin with the raw amino-acid sequence, 4662 residues long: MNSNKNFVNKLYRYYRKNDNYNKKRIFIYENTVYYTPDDCVFCTQLNCTIKKRWDKKKKKKLKSAEKEEYFKDYKYFETENNDNTDEYYKNDEEENEASDLMITYCDRHVSLINILVNMFKIYNKKKTYLNVTLNINYVFLQIIYNIILYFVYLYIYYTKYIYYILRTYLFLLLYNSFHIIRENCYYPNIFLYNYYRNRIKKNILQQWKMKKKKKKKKRKKKKHSLFLCKKNMRDTKSNHFVRNYSYKIIKDSYTNHVDDVIIKFLLYMFYEKFINKFNKYINIHHHYHNVYKKIYYYKIKEGMLPFLCDHIFKCNYNLFYIFNRYNFQFNAYNILLNCKEKNSEQIFIFFNKKFLIKKDYVMNYLIYVINNIREKINKIKIIYDDTKKCYFIFYKNKCTSCLITHNILNVPIEGIKKKSDNIYFEKPKTNIKNEDVNCKYNKIFYKYYISVINDMLCISKNNMIIKNIDSINKNHKRLIKISNYNITNVCMFLLLPEIFCKYYKKGDKKKKKNKNVKKIIFKERRVNIKSYKILLKCEILTHFNFFNVINCDRYIYQNNLYNNLVGLKKGSYMKTCTNDETYRNDGDVNNKNGYNNNEHSNSSNERSNNNGDNNNNNHNNNNHNNNHHNNGSNNHNGNNNSNNDDNDKDDDKKGNDKKNEDKDDENKSDDDNDDDKKNGDGLNRSLDTKKRKEKSKNKNKMKPDNTLNENVKELLFDKEGKSYTCTNNDLSLVNNTICESIKKRKSNRGEKRNYNNEKNDKNSLNNVIAENAYKIIKNGRLYKPTEPVNIFRSHNKFMLKEMMWMSIDYYEEKRWKKNVSKKFGYLMSNHFEEKKKNDKYFISSQISNDIKMFWFFMLNEIRPDLVPVDLDHKIKNKNHLKNDFLNSFRKNLQIEEYNLEMDDNNQYSFNQHDGINEESSVQNKSEKNSFSINTSIDDNWGLMNKMSHQNGKNNNHNDYNNKCEDNKNNDYNNNKCDDNNNNDYNNNKCDDNKNNDYNNKCEDNKNNDYNNNKCDDNNNDDYNNKCDDNNHNDYNNKCDVNKLNNISIEHTNCINSNKYNLLNISTHKEINMIDNNTNDISTVCCENNNNNNNNNNNNERNNHINVMKKKNIIDYENYDQIVMNIEENVNKELLKKHKIYKKDYYTVENVHINHIQYDDNNLYYNDDLYNYYQSKNDDGYLDLSNHLYIYCLLFISISLIEINEHINFSRPDNHLPNDVDNALLEDEQNNSNNNNYNNYNNDIFVNYMNAYNNGELFCNNTQRDNIKFPQYGTFKKIKNEFEDFRELKKKKKTDMLKNNKDGLLSNVDNINLDIIRKGNTEFKENKIVLNNENNVCYPNAKRNSIMDKDIYENEKDINNCENNILRGKQENIKNYEENKMIETYYDEMLLKKKSINQLRLISEEMLLSKRENDNGNDYKNKNFIDHYDEENYNGYDKLNKYVNKRILSIDNNNNNNNIENKLDSFVVHKNMNNSNIYNILSVPSLNNTDVKDLVVIPYSCDNNNNNNNSNNNNSNSNNNSNSNIKTKESVSTTNHNNSSNNIIYENIKNDYINEIKEKNVNVYLHNMELYGGIPYPFEYKYIDDFYDDINLPLMNLAEYDKYTFFLYLFYMKNSSYILKKQMKKDKRKRKKEFTDVLLTKKRTPKRKINKLENEKKIEQIEDAEKVLSSEKVVDGENILKVINDQNNLSNEVNIIKDVTISGTKINSKNNDKSDDKNDDKNDKKNDGKNDKNDEKDDNKTGEKGDNKIGEKDDNKINEKDDNKINDKEIVGTVLRTSTKNKTKNKLKNKDGYVIKKEHLGDLEERQQKKIKKKEMETIKKWKEKKDEWELEETNFLLILTKTYMNYINMDEIIKREYGISLNSCTALGDIKNKNNMNNMNNMNNMNNMNNMNNMNNMNNIDETDNGNNINIENNVYNSNNGNINNVVEIKNANNSKTKEHEEINNDNSNVENKNVTNDFIKKYKGHEYIMSFNKFENNINNKLKNYTDFINWNIISVALVSYNKISHIYEKKRGPNECKEKFLSLIKDDIYKITKLQNLYHDYYLNTIKNNNSMKRKKKKCITKVKFLPLFSSNNVNKLIGMFNKYMNEKLKKYELKKMDMNNNNKIETLKVKNIIIKNEKIEEKKHDEEINILNKNDDKINEYKDELNVKDEDIHLIKKVKKKSSIIKKKKKGFFHNLFSTFSGKKSRESSEEDTDCGRDSFFSCSDVEISATKLDDSCISFSNNKNKSNKKKRAKKNIKLGEEENESECNNEGECNNEGECNNEGECNNEGECNNEGECNNEGEGNNESEIASTKKELLDINNKINDENDNHNFNKKRSSISYYFDDYFDEHFEDYLDDYFEDEWDDYVDENFVDNSDEFFEEDVNEFKKINNIDENTTNNNSTDIIKKNEKNNIEHIKELNNTYVDENSHIEKKEPTICVNIKNSTNENNNILINNDTFKSKDEKKDTYNKEVCVNSISQLIIYNKCKDDEYKYDFNYILKNRDKIKKWLNCICKNKKNIKEFMNIINNDYFVKNKYFHRLIESVVNNVSKEQSSFTYSNNIIINSLNKEPDYELTYRENSNDRNINNPLDNEFIKMIRKIMEYDKKRKLKSIQKLKNISNNYSYNTINEFYISKPNESYNTVNEFVQKILNYVPYVDDKKKIIIKKIRKRFQCKNLITQILLADYILDKLKNFPINESIESSKNNNKTIDMLLSETRLKAYSKYINEHFNDNYDPVKIETSFLKMFSSENDELYKKNILNNNNNKEVTHINIKSEEVALNKSIQETTNTVLKDTIIESNEISCIVDKTVDIHNEQNDKKHDTSPADINNKDYIGYMHVNKKELVSMQNSSNPSDIIQQCVNKVEVYNKDVCQTNGYMNINDDNKMNNFVNNNITHINNNVNNNNNIVNHLNNNNNNNNANNINNLNVNHLNNNISQINNNYNNSNMSSIYIASDQNEHFNKMTVMEKQDPMNNTKQRSHSSYHTSFPMQNNNTPLYNKLEGDQIKLSKYNSLESNKNNIDIISTNNNATKTKDHVIKANNKGSTRGKRQTLSLVKPHKESEHVQDSSVINQPVKNVSSKGEEIILGNNRQKSQPIKNVDITNKMTKYKTSVSSSILSSDKLKNNNILNTVQNESAYLSSKFNSNVQTLNNNVNNNVNINVNNMNSNISNNMNSNINNNMNSNMCNNMNSNMSNNMNSNMHVMDQGSFFTSNMVNREVNNLLNEEQRINTNVVSSHYNSVVSSTQFINDRGNYTNRIQKILSNNKYSLTPMKNNITQENMNNCIVNHQTPNKNIQEYYIPNASPNKLNKSISNVDIMKSNTSSILYPQAHNSVSSNFNNVSETLQNVNVLHASKKYHMNNSNDICTNINNNNNNNNNNNNNNNNNVHHNSMNQNNMNTINMNNINMNNINMNNITMNNINMNNINMNNINMNNTNNNVNNINMNNINSNVNNINNSMNNINISNNINYNISNNYNNSVSMYNIPNKEDDKFISPLHSSMQNNKYMPINRNNSSMSYNKTPICDSVELPIKQMSGNISNNCNASMQLEVSSNSSSKKLQHTIGSNTINTDKKSLLMYIENRARTGSSSINKINDDMFSIKSSTPSNYPPSYTTHQQFISESENKSNLYHDQMLNQDVIMDNKNVQNFTYAPCSNSLNNNLKNTNTMNNETRSNIISNYKQVKYSNISVNNTPNNVIMQTQNMTVQNNAKMSLNGSTTHPIVNRTNMENIDLIKLANDPLNIHRNGIHMGNIKNDNIEEKKNVSSNIRSIADNSQRLQNIHLGNQQNDIQHMNLDNINNNNNNNNLKMKKKSKNNININNNPNNNLNNNGQIDNAYLNVSPTISNSLQQTNMYQSDMKNSIIYNSSIQEKDPNNRNYNTQGNNVQTMNQSNGNVYNVNVPNRKQSNLNQYVNPMNFLIQVLNKCNSNTNGQVKASASNANVNYANVNSTSLNQPNINNVGMNQPNINNVGMNQPNINNVGMNQPNINNVGMNQPNINNVSMNQPNINNVNMNQPNINNVSMNQPNINNFSMNQSNTNNFNMNKPSTSSFSMNQPSTNNFSMNKSSTNNFSINQTSANNFSMHQPSTNNFSMNKPSTNNFSTNKPSTNNFSMNQPNINNISMNQPNTNNVHMNNLNMNQSGMNHTNMTSPIFNQSNSSKQSVNENAFVPPAYHTSNIIQKNATSVYNDNFNNPNVVNVGLKNTMTKNIIQRVPQKKGYSTHDMNQQERLQQERLQQERLQQERLQQERLQQERLQQERLQQERLQQERLQQERLQQERLQQERLQQKWEQQKIQQELYQKSHNDKESETNNSSSYQELNNHTLQENTIAKDSMRQHIFLKTRQQENIPKELQKMHSHQLQTEKMKTQQLSAHSLQQQMYPQQMTSQVHSSFHAQKIKQQLQQQMNHQQINKHQMNQQQMNKQQMNQQQINQQQMNQQQINQQQINQQQINQQQINQQQINQQQINQQQINQQQINQQQINQQQINQQSMSKYPYQAQEIKKHMDQLQQNVSIVTQQKMQPIYSVKQNMPFNEENEMKRNTRKITLPMTHQIPNVPNIQQQINNKMDERMSTENINENNLYNMMNRKLSTSINKFNNHDQYYPYDSYQQQQLQGNNINVMDIRNVDKNENNIFLLKNNQSRDIQNNCTNIMMNNNIPSSYITPGQAYKLNSNQNINHTQQKK.

2 consecutive transmembrane segments (helical) span residues 136-156 and 161-181; these read INYV…YLYI and YIYY…FHII. An LRR 1 repeat occupies 466 to 489; that stretch reads IKNIDSINKNHKRLIKISNYNITN. The tract at residues 583–710 is disordered; it reads YRNDGDVNNK…KMKPDNTLNE (128 aa). Positions 590 to 644 are enriched in low complexity; it reads NNKNGYNNNEHSNSSNERSNNNGDNNNNNHNNNNHNNNHHNNGSNNHNGNNNSNN. Positions 650 to 666 are enriched in basic and acidic residues; the sequence is DDDKKGNDKKNEDKDDE. The span at 690-701 shows a compositional bias: basic residues; sequence KKRKEKSKNKNK. Residues 783 to 856 enclose the HSA domain; that stretch reads YKPTEPVNIF…ISNDIKMFWF (74 aa). The segment at 942–967 is disordered; it reads GLMNKMSHQNGKNNNHNDYNNKCEDN. The stretch at 1150–1172 is one LRR 2 repeat; sequence NVHINHIQYDDNNLYYNDDLYNY. Positions 1505 to 1524 are enriched in low complexity; the sequence is NNNNNSNNNNSNSNNNSNSN. Disordered stretches follow at residues 1505–1540 and 1705–1761; these read NNNN…NNSS and KINS…NEKD. Residues 1710 to 1761 show a composition bias toward basic and acidic residues; it reads NNDKSDDKNDDKNDKKNDGKNDKNDEKDDNKTGEKGDNKIGEKDDNKINEKD. 2 LRR repeats span residues 2063–2086 and 2129–2153; these read ITKV…MFNK and DEEI…NVKD. Residues 2228–2261 form a disordered region; the sequence is KNKSNKKKRAKKNIKLGEEENESECNNEGECNNE. Basic residues predominate over residues 2230 to 2241; that stretch reads KSNKKKRAKKNI. Residues 2246–2261 show a composition bias toward acidic residues; the sequence is EENESECNNEGECNNE. LRR repeat units lie at residues 2672-2695, 2773-2796, 2864-2888, and 2904-2929; these read LDKL…KTID, NTVL…TVDI, INDD…VNNN, and ANNI…YNNS. Residues 2956 to 2975 are disordered; it reads MNNTKQRSHSSYHTSFPMQN. 6 LRR repeats span residues 3377 to 3400, 3438 to 3461, 3756 to 3781, 3935 to 3960, 3965 to 3985, and 3986 to 4010; these read QNNM…NITM, NNSM…YNNS, SQRL…NINN, QPNI…NINN, QPNI…SMNQ, and PNIN…NINN. Residues 4203–4272 adopt a coiled-coil conformation; the sequence is DMNQQERLQQ…ERLQQKWEQQ (70 aa). LRR repeat units follow at residues 4296–4321 and 4333–4357; these read YQEL…IFLK and QKMH…SLQQ. The interval 4384 to 4412 is disordered; sequence QMNHQQINKHQMNQQQMNKQQMNQQQINQ.

It localises to the membrane. This Plasmodium falciparum (isolate 3D7) protein is Protein PF3D7_1417600.